We begin with the raw amino-acid sequence, 72 residues long: Cell division protein ZapB (72 aa).

Positions 2-72 form a coiled coil; it reads SLEILDQLEG…RSLLGQIDNV (71 aa). The disordered stretch occupies residues 34–57; the sequence is NQQAQQANDELRSENEQLKGEHNN. Over residues 42–57 the composition is skewed to basic and acidic residues; that stretch reads DELRSENEQLKGEHNN.

Belongs to the ZapB family. Homodimer. The ends of the coiled-coil dimer bind to each other, forming polymers. Interacts with FtsZ.

It is found in the cytoplasm. In terms of biological role, non-essential, abundant cell division factor that is required for proper Z-ring formation. It is recruited early to the divisome by direct interaction with FtsZ, stimulating Z-ring assembly and thereby promoting cell division earlier in the cell cycle. Its recruitment to the Z-ring requires functional FtsA or ZipA. The polypeptide is Cell division protein ZapB (Mannheimia succiniciproducens (strain KCTC 0769BP / MBEL55E)).